Here is a 300-residue protein sequence, read N- to C-terminus: Inositol polyphosphate multikinase beta (300 aa).

Serine 78 is subject to Phosphoserine.

This sequence belongs to the inositol phosphokinase (IPK) family. As to quaternary structure, interacts with KIN10 and KIN11. Phosphorylated by KIN10. Expressed in leaves, stems, roots, siliques and flowers. Detected in vascular strands, stigma cells, the abscission zones of fully elongated siliques, the root central cylinder and the root tip.

The protein localises to the nucleus. It carries out the reaction 1D-myo-inositol 1,4,5-trisphosphate + 2 ATP = 1D-myo-inositol 1,3,4,5,6-pentakisphosphate + 2 ADP + 2 H(+). The catalysed reaction is 1D-myo-inositol 1,3,4,6-tetrakisphosphate + ATP = 1D-myo-inositol 1,3,4,5,6-pentakisphosphate + ADP + H(+). Its activity is regulated as follows. Down-regulated by KIN10 through its protein phosphorylation. Its function is as follows. Inositol phosphate kinase with a broad substrate specificity. Phosphorylates inositol 1,4,5-trisphosphate (Ins(1,4,5)P3), inositol 1,4,5,6-tetrakisphosphate (Ins(1,4,5,6)P4), inositol 1,3,4,5-tetrakisphosphate (Ins(1,3,4,5)P4), inositol 1,3,4,6-tetrakisphosphate (Ins(1,3,4,6)P4) and inositol 1,2,3,4,6-pentakisphosphate (Ins(1,2,3,4,6)P5) but not inositol 1,4-bisphosphate (Ins(1,4)P2), inositol 1,3,4-trisphosphate (Ins(1,3,4)P3), inositol 1,2,6-trisphosphate (Ins(1,2,6)P3), inositol 3,4,5,6-tetrakisphosphate (Ins(3,4,5,6)P4), inositol 1,3,4,5,6-pentakisphosphate (Ins(1,3,4,5,6)P5), inositol 1,2,4,5,6-pentakisphosphate (Ins(1,2,4,5,6)P5) or inositol hexakisphosphate (InsP6). Involved in the auxin signaling pathway. Regulates axillary shoot branching and is required for phytate synthesis in seeds. This Arabidopsis thaliana (Mouse-ear cress) protein is Inositol polyphosphate multikinase beta (IPK2b).